The following is a 235-amino-acid chain: KNMITGAAQMDGAILVVSGADGPMPQTKEHILLAKQVGVPNIVVFLNKEDQVDDKELLELVELEVRETLDKYEFPGDEIPVIPGSALLALEALIENPKTQRGENPWVDKIYQLMDKVDSYIPTPQRETDKPFLLAVEDVLSITGRGTVATGRVERGTLKISDTVEFVGLKPTQSAVVTGLEMFKKTLDETLAGDNVGVLLRGVQKKDIERGMVIAKPGTITPHTKFEAQVYVLTK.

In terms of domain architecture, tr-type G spans 1-125; sequence KNMITGAAQM…KVDSYIPTPQ (125 aa). 47–50 is a GTP binding site; the sequence is NKED.

The protein belongs to the TRAFAC class translation factor GTPase superfamily. Classic translation factor GTPase family. EF-Tu/EF-1A subfamily.

The protein resides in the plastid. It is found in the chloroplast. The catalysed reaction is GTP + H2O = GDP + phosphate + H(+). Functionally, GTP hydrolase that promotes the GTP-dependent binding of aminoacyl-tRNA to the A-site of ribosomes during protein biosynthesis. The protein is Elongation factor Tu, chloroplastic (tufA) of Gonium pectorale (Green alga).